The chain runs to 101 residues: UPF0235 protein MmarC6_1603 (101 aa).

The protein belongs to the UPF0235 family.

The protein is UPF0235 protein MmarC6_1603 of Methanococcus maripaludis (strain C6 / ATCC BAA-1332).